We begin with the raw amino-acid sequence, 1003 residues long: Translation initiation factor IF-2 (1003 aa).

A disordered region spans residues 36 to 392 (SSTIEPPVVK…RQKRNEYESM (357 aa)). Over residues 62 to 151 (AAKPAAAKPA…PKPAAAAKPA (90 aa)) the composition is skewed to low complexity. Composition is skewed to pro residues over residues 178 to 190 (DGMPRPMGKPAPK) and 213 to 230 (PRPGGGPRPGGGPRPGGG). 2 stretches are compositionally biased toward gly residues: residues 231-243 (PRPQGQGRPGGQR) and 255-271 (GNRGGQRQGAGAGGPRP). The span at 273 to 286 (GGPRPQGGSRPQGG) shows a compositional bias: low complexity. Gly residues predominate over residues 329-372 (GKGGRGGQAGGGAGGGFNRGGGTGGGAGRGGRRGGTAGAFGRPG). A compositionally biased stretch (basic residues) spans 376–385 (RRGRKSKRQK). Positions 498-670 (KRPPVVTVMG…VCLTADAELD (173 aa)) constitute a tr-type G domain. The interval 507 to 514 (GHVDHGKT) is G1. 507–514 (GHVDHGKT) contributes to the GTP binding site. Residues 532-536 (GITQG) are G2. The interval 557–560 (DTPG) is G3. Residues 557 to 561 (DTPGH) and 611 to 614 (NKID) contribute to the GTP site. The segment at 611-614 (NKID) is G4. Residues 647 to 649 (SAK) are G5.

The protein belongs to the TRAFAC class translation factor GTPase superfamily. Classic translation factor GTPase family. IF-2 subfamily.

Its subcellular location is the cytoplasm. In terms of biological role, one of the essential components for the initiation of protein synthesis. Protects formylmethionyl-tRNA from spontaneous hydrolysis and promotes its binding to the 30S ribosomal subunits. Also involved in the hydrolysis of GTP during the formation of the 70S ribosomal complex. The sequence is that of Translation initiation factor IF-2 from Corynebacterium glutamicum (strain R).